Consider the following 450-residue polypeptide: Phosphoglucosamine mutase (450 aa).

Serine 104 functions as the Phosphoserine intermediate in the catalytic mechanism. Residues serine 104, aspartate 245, aspartate 247, and aspartate 249 each coordinate Mg(2+). Phosphoserine is present on serine 104.

It belongs to the phosphohexose mutase family. Mg(2+) serves as cofactor. Post-translationally, activated by phosphorylation.

The catalysed reaction is alpha-D-glucosamine 1-phosphate = D-glucosamine 6-phosphate. Functionally, catalyzes the conversion of glucosamine-6-phosphate to glucosamine-1-phosphate. In Phenylobacterium zucineum (strain HLK1), this protein is Phosphoglucosamine mutase.